Consider the following 251-residue polypeptide: Phosphoribosylaminoimidazole-succinocarboxamide synthase (251 aa).

Belongs to the SAICAR synthetase family.

The catalysed reaction is 5-amino-1-(5-phospho-D-ribosyl)imidazole-4-carboxylate + L-aspartate + ATP = (2S)-2-[5-amino-1-(5-phospho-beta-D-ribosyl)imidazole-4-carboxamido]succinate + ADP + phosphate + 2 H(+). It functions in the pathway purine metabolism; IMP biosynthesis via de novo pathway; 5-amino-1-(5-phospho-D-ribosyl)imidazole-4-carboxamide from 5-amino-1-(5-phospho-D-ribosyl)imidazole-4-carboxylate: step 1/2. The protein is Phosphoribosylaminoimidazole-succinocarboxamide synthase of Phenylobacterium zucineum (strain HLK1).